The following is a 622-amino-acid chain: Chaperone protein HscA homolog (622 aa).

The protein belongs to the heat shock protein 70 family.

Chaperone involved in the maturation of iron-sulfur cluster-containing proteins. Has a low intrinsic ATPase activity which is markedly stimulated by HscB. In Burkholderia mallei (strain NCTC 10247), this protein is Chaperone protein HscA homolog.